A 323-amino-acid chain; its full sequence is MSNYDALYRQLAAMGQERWAEQLQATLPDKLALESTAKMAGWQSAMQSLPEISPSRIELLDTVTIGSSDDLGQVDREELMAHLQAFHPWRKGPYNFFGIEIDTEWRSDWKWERLLPHIQPLAGRRVIDVGCGNGYHGWRMRGAGAEFVLGIEPFLLSVQQFQVMQRYLCDPQHHVIPIGIEEVPPNLACFDSVFSMGVLYHRRSPLDHLFELKGCLRPGGELILETLIVEGDRETIFMPPGRYAKMRNVWFIPSIAAMTLWLERCGFTDIACVDTNRTSREEQRSTEWMRFESLADFLDPDDAQKTIEGHPAPLRAIFTATKP.

Carboxy-S-adenosyl-L-methionine is bound by residues Lys91, Trp105, Lys110, Gly130, Ile180 to Glu181, Met196, Tyr200, and Arg315.

Belongs to the class I-like SAM-binding methyltransferase superfamily. CmoB family. As to quaternary structure, homotetramer.

The enzyme catalyses carboxy-S-adenosyl-L-methionine + 5-hydroxyuridine(34) in tRNA = 5-carboxymethoxyuridine(34) in tRNA + S-adenosyl-L-homocysteine + H(+). Functionally, catalyzes carboxymethyl transfer from carboxy-S-adenosyl-L-methionine (Cx-SAM) to 5-hydroxyuridine (ho5U) to form 5-carboxymethoxyuridine (cmo5U) at position 34 in tRNAs. The polypeptide is tRNA U34 carboxymethyltransferase (Citrifermentans bemidjiense (strain ATCC BAA-1014 / DSM 16622 / JCM 12645 / Bem) (Geobacter bemidjiensis)).